The primary structure comprises 95 residues: Hiracin-JM79 immunity factor (95 aa).

In terms of biological role, imparts immunity to bacteriocin hiracin-JM79 to naturally sensitive host strains. This is Hiracin-JM79 immunity factor from Enterococcus hirae.